A 38-amino-acid chain; its full sequence is Cytochrome b6-f complex subunit 5 (38 aa).

A helical transmembrane segment spans residues 5–25 (LLSGIVLGLIPITLAGLFVTA).

This sequence belongs to the PetG family. In terms of assembly, the 4 large subunits of the cytochrome b6-f complex are cytochrome b6, subunit IV (17 kDa polypeptide, PetD), cytochrome f and the Rieske protein, while the 4 small subunits are PetG, PetL, PetM and PetN. The complex functions as a dimer.

The protein resides in the plastid. The protein localises to the chloroplast thylakoid membrane. Its function is as follows. Component of the cytochrome b6-f complex, which mediates electron transfer between photosystem II (PSII) and photosystem I (PSI), cyclic electron flow around PSI, and state transitions. PetG is required for either the stability or assembly of the cytochrome b6-f complex. The protein is Cytochrome b6-f complex subunit 5 of Adiantum capillus-veneris (Maidenhair fern).